A 336-amino-acid polypeptide reads, in one-letter code: Torsin-1B (336 aa).

The first 24 residues, 1 to 24 (MRRIGAFGGSTALWALLAAHVAGA), serve as a signal peptide directing secretion. The N-linked (GlcNAc...) asparagine glycan is linked to Asn-64. 109–116 (GWAGTGKN) is an ATP binding site. N-linked (GlcNAc...) asparagine glycosylation occurs at Asn-165.

It belongs to the ClpA/ClpB family. Torsin subfamily. Homohexamer. Interacts with TOR1A; the interaction may be specific of neural tissues. Interacts with TOR1AIP1; TOR1AIP1 is required for TOR1B location on the nuclear membrane. Interacts (ATP-bound) with TOR1AIP2; important for endoplasmic reticulum integrity. N-glycosylated. Highly expressed in liver and muscle; lower expression levels are observed in brain (at protein level).

The protein localises to the endoplasmic reticulum lumen. The protein resides in the nucleus membrane. It carries out the reaction ATP + H2O = ADP + phosphate + H(+). May serve as a molecular chaperone assisting in the proper folding of secreted and/or membrane proteins. Plays a role in non-neural cells nuclear envelope and endoplasmic reticulum integrity. May have a redundant function with TOR1A in non-neural tissues. In Mus musculus (Mouse), this protein is Torsin-1B (Tor1b).